Reading from the N-terminus, the 442-residue chain is UDP-N-acetylmuramoylalanine--D-glutamate ligase (442 aa).

Position 109–115 (109–115) interacts with ATP; sequence GSNGKTT.

It belongs to the MurCDEF family.

Its subcellular location is the cytoplasm. The catalysed reaction is UDP-N-acetyl-alpha-D-muramoyl-L-alanine + D-glutamate + ATP = UDP-N-acetyl-alpha-D-muramoyl-L-alanyl-D-glutamate + ADP + phosphate + H(+). It participates in cell wall biogenesis; peptidoglycan biosynthesis. In terms of biological role, cell wall formation. Catalyzes the addition of glutamate to the nucleotide precursor UDP-N-acetylmuramoyl-L-alanine (UMA). In Solibacter usitatus (strain Ellin6076), this protein is UDP-N-acetylmuramoylalanine--D-glutamate ligase.